The following is a 346-amino-acid chain: Uricase (346 aa).

The interval 1 to 23 (MFATPLRQPTNASGARPAVSMDG) is disordered. Active-site charge relay system residues include Lys-39 and Thr-84. Urate-binding residues include Thr-84, Asp-85, Phe-208, Arg-225, Val-273, Gln-274, and Asn-300. The active-site Charge relay system is His-302. Positions 344-346 (SHL) match the Microbody targeting signal motif.

The protein belongs to the uricase family. In terms of tissue distribution, malpighian tubules.

It is found in the peroxisome. It carries out the reaction urate + O2 + H2O = 5-hydroxyisourate + H2O2. Its pathway is purine metabolism; urate degradation; (S)-allantoin from urate: step 1/3. With respect to regulation, repressed by 20-hydroxyecdysone. In terms of biological role, catalyzes the oxidation of uric acid to 5-hydroxyisourate, which is further processed to form (S)-allantoin. The polypeptide is Uricase (Uro) (Drosophila pseudoobscura pseudoobscura (Fruit fly)).